The primary structure comprises 1077 residues: Adenylate cyclase type 4 (1077 aa).

Residues 1 to 28 lie on the Cytoplasmic side of the membrane; sequence MARLFSPRPPPSEDLFYETYYSLSQQYP. 6 consecutive transmembrane segments (helical) span residues 29–50, 61–80, 94–117, 120–138, 141–162, and 170–190; these read LLLL…VAWA, FLTT…GLAS, GLVW…VSAW, VSYF…PLGM, AAVA…YLGP, and LLPQ…AGVY. Residues 191–585 are Cytoplasmic-facing; sequence HKALMERALR…YRLSAIPAFK (395 aa). 3 residues coordinate Mg(2+): Asp278, Ile279, and Asp322. Residues 278–283, 320–322, and Arg366 contribute to the ATP site; these read DIVGFT and LGD. Ser520 carries the post-translational modification Phosphoserine. Thr536 carries the phosphothreonine modification. A run of 3 helical transmembrane segments spans residues 586–607, 611–633, and 664–687; these read YYEA…LVTN, ALAI…CFSE, and IALG…FFPT. Residues 688 to 714 are Extracellular-facing; the sequence is SSDCPFQAPNVSSMISNLSWELPGSLP. N-linked (GlcNAc...) asparagine glycans are attached at residues Asn697 and Asn704. Transmembrane regions (helical) follow at residues 715 to 736, 744 to 764, and 791 to 807; these read LISV…SLFL, LLLL…SHAW, and MGAI…LVLA. Residues 808–1077 lie on the Cytoplasmic side of the membrane; sequence RQNEYYCRLD…RTGPPSATLG (270 aa). ATP contacts are provided by residues Lys925, 1005–1007, 1012–1016, and Lys1052; these read DIW and NVASR.

It belongs to the adenylyl cyclase class-4/guanylyl cyclase family. Mg(2+) serves as cofactor. Requires Mn(2+) as cofactor. As to expression, detected in the zona glomerulosa and the zona fasciculata in the adrenal gland (at protein level).

It is found in the cell membrane. Its subcellular location is the cytoplasm. It carries out the reaction ATP = 3',5'-cyclic AMP + diphosphate. With respect to regulation, activated by forskolin. Insensitive to calcium/calmodulin. Stimulated by GNAS and by the G-protein beta and gamma subunit complex. Catalyzes the formation of the signaling molecule cAMP in response to G-protein signaling. The sequence is that of Adenylate cyclase type 4 (ADCY4) from Homo sapiens (Human).